The following is a 266-amino-acid chain: Ribosomal RNA small subunit methyltransferase J (266 aa).

Residues 109-110 (RD), 125-126 (ER), and D185 each bind S-adenosyl-L-methionine.

It belongs to the methyltransferase superfamily. RsmJ family.

Its subcellular location is the cytoplasm. It catalyses the reaction guanosine(1516) in 16S rRNA + S-adenosyl-L-methionine = N(2)-methylguanosine(1516) in 16S rRNA + S-adenosyl-L-homocysteine + H(+). Functionally, specifically methylates the guanosine in position 1516 of 16S rRNA. The polypeptide is Ribosomal RNA small subunit methyltransferase J (Cellvibrio japonicus (strain Ueda107) (Pseudomonas fluorescens subsp. cellulosa)).